The sequence spans 245 residues: Fumarate reductase iron-sulfur subunit (245 aa).

The region spanning 17–98 (PQSAVNKPHF…NGVITLMPMP (82 aa)) is the 2Fe-2S ferredoxin-type domain. [2Fe-2S] cluster-binding residues include cysteine 60, cysteine 65, cysteine 68, and cysteine 80. One can recognise a 4Fe-4S ferredoxin-type domain in the interval 145–174 (AQEVFELDRCIECGCCIASCGTKLMRPNFI). [4Fe-4S] cluster is bound by residues cysteine 154, cysteine 157, and cysteine 160. 3 residues coordinate [3Fe-4S] cluster: cysteine 164, cysteine 211, and cysteine 217. A [4Fe-4S] cluster-binding site is contributed by cysteine 221.

The protein belongs to the succinate dehydrogenase/fumarate reductase iron-sulfur protein family. Part of an enzyme complex containing three subunits: a flavoprotein (frdA), an iron-sulfur protein (frdB), and diheme cytochrome b (frdC). [2Fe-2S] cluster serves as cofactor. It depends on [3Fe-4S] cluster as a cofactor. Requires [4Fe-4S] cluster as cofactor.

The catalysed reaction is a menaquinone + succinate = a menaquinol + fumarate. This is Fumarate reductase iron-sulfur subunit (frdB) from Helicobacter pylori (strain J99 / ATCC 700824) (Campylobacter pylori J99).